A 365-amino-acid chain; its full sequence is MFDMYIESGGKKLRCGYTTGSCAAAAAKAATYMLFNKKDISVIEIDTPKNIKLNLEIQDIQVEKNSISCSIVKDGGDDIDATSGLEIFAKAEEIEEGFELCGGEGVGVVTKEGLFVEKGQPAINPVPREMIKKEVLSVLPKDKGVRITIFVPRGREIAKKTFNPRLGIVNGISILGTTGIVYPMSEEALKESIRIEIRQKSVNNKDLVFVFGNMGERFLRERGYKKDNIVVISNYVGFSIECALAQGIKDLTIVGHIGKLSKIAFGCFNTHSRVSDVRLEVIALELTLMGYDLELVQKVLDQKTSEGAVRLLGDDFPMLYERIGEKVLKRLDIYAYGEANFNILMYYGSKEMKLLYESKNSNLFD.

The protein belongs to the CbiD family.

The catalysed reaction is Co-precorrin-5B + S-adenosyl-L-methionine = Co-precorrin-6A + S-adenosyl-L-homocysteine. It functions in the pathway cofactor biosynthesis; adenosylcobalamin biosynthesis; cob(II)yrinate a,c-diamide from sirohydrochlorin (anaerobic route): step 6/10. Functionally, catalyzes the methylation of C-1 in cobalt-precorrin-5B to form cobalt-precorrin-6A. In Clostridium perfringens (strain SM101 / Type A), this protein is Cobalt-precorrin-5B C(1)-methyltransferase.